A 55-amino-acid polypeptide reads, in one-letter code: Protein SOX-19 (55 aa).

Positions 1-55 (MVWSQIERRKIMEQWPDMHNAEISKRLGKRWKLLPDYEKIPFIKEAERLRLKHMA) form a DNA-binding region, HMG box.

Its subcellular location is the nucleus. This is Protein SOX-19 (Sox19) from Mus musculus (Mouse).